The following is a 97-amino-acid chain: MNIRXLHDRVIVKRKEVETKSAGGIVLTGSAAAKSTRGEVLAVGNGRILENGEVKPLDVKVGDIVIFNDGYGVKSEKIDNEEXLIMSDSDXLAIVEA.

Belongs to the GroES chaperonin family. As to quaternary structure, heptamer of 7 subunits arranged in a ring. Interacts with the chaperonin GroEL.

The protein resides in the cytoplasm. Its function is as follows. Together with the chaperonin GroEL, plays an essential role in assisting protein folding. The GroEL-GroES system forms a nano-cage that allows encapsulation of the non-native substrate proteins and provides a physical environment optimized to promote and accelerate protein folding. GroES binds to the apical surface of the GroEL ring, thereby capping the opening of the GroEL channel. The chain is Co-chaperonin GroES from Stenotrophomonas maltophilia (Pseudomonas maltophilia).